The chain runs to 497 residues: B3 domain-containing protein REM1 (497 aa).

3 consecutive DNA-binding regions (TF-B3) follow at residues 7 to 92 (PSLF…SSES), 142 to 239 (FLRA…LCSH), and 278 to 379 (FLTQ…HSKI). The segment at 87–135 (AVSSESDDDESDDTDDSESDDESNDTDDSESDDSEDNGEGDSSLVNKEA) is disordered. Residues 91–125 (ESDDDESDDTDDSESDDESNDTDDSESDDSEDNGE) show a composition bias toward acidic residues.

In terms of tissue distribution, specifically expressed in the reproductive meristem.

The protein resides in the nucleus. Its function is as follows. May play a role in flower development. The protein is B3 domain-containing protein REM1 (REM1) of Brassica oleracea var. botrytis (Cauliflower).